We begin with the raw amino-acid sequence, 215 residues long: 2-dehydro-3-deoxy-phosphogluconate aldolase (215 aa).

Glu-46 functions as the Proton acceptor in the catalytic mechanism. Pyruvate is bound by residues Arg-50, Thr-74, and Lys-134. Lys-134 functions as the Schiff-base intermediate with substrate in the catalytic mechanism.

The protein belongs to the KHG/KDPG aldolase family. Homotrimer.

It carries out the reaction 2-dehydro-3-deoxy-6-phospho-D-gluconate = D-glyceraldehyde 3-phosphate + pyruvate. It participates in carbohydrate acid metabolism; 2-dehydro-3-deoxy-D-gluconate degradation; D-glyceraldehyde 3-phosphate and pyruvate from 2-dehydro-3-deoxy-D-gluconate: step 2/2. Its function is as follows. Involved in the degradation of glucose via the Entner-Doudoroff pathway. Catalyzes the reversible, stereospecific retro-aldol cleavage of 2-keto-3-deoxy-6-phosphogluconate (KDPG) to pyruvate and D-glyceraldehyde-3-phosphate. Involved in the degradation of 3,6-anhydro-L-galactose (L-AnG), which is the major monomeric sugar of red macroalgae. The cleavage of KDPG to glyceraldehyde 3-phosphate and pyruvate is the sixth step of this pathway. The polypeptide is 2-dehydro-3-deoxy-phosphogluconate aldolase (Pseudoalteromonas atlantica (strain T6c / ATCC BAA-1087)).